The primary structure comprises 194 residues: MKLAREFYARDTREVARDLLGKVLVHRDGGVRRAARIVETEAYHGPDDLASHARFGPTRRAGIMFGPAGVAYVYLIYGTSHCMNVVTGAEGFPSAVLLRAGEPVEGCLHSTRGPGNLCRALAIRREHDNGRDLAGDDLFVEDAPPPRERIVAARRVNVDYAGPWAERPWRFALEGNAFVSRAPGEWRAVRGRRR.

The protein belongs to the DNA glycosylase MPG family.

This chain is Putative 3-methyladenine DNA glycosylase, found in Anaeromyxobacter sp. (strain Fw109-5).